A 241-amino-acid polypeptide reads, in one-letter code: Xyloglucan-specific endo-beta-1,4-glucanase 1 (241 aa).

The N-terminal stretch at 1–19 (MKGFFAGVVAAATLAVASA) is a signal peptide. Glu-136 is a catalytic residue. 2 N-linked (GlcNAc...) asparagine glycosylation sites follow: Asn-174 and Asn-190. Glu-222 is an active-site residue.

It belongs to the glycosyl hydrolase 12 (cellulase H) family. In terms of assembly, interacts with host apoplastic glucanase inhibitor GIP1.

It localises to the secreted. Its subcellular location is the host. It carries out the reaction xyloglucan + H2O = xyloglucan oligosaccharides.. With respect to regulation, the xyloglucanase activity is inhibited by the binding of the host apoplastic glucanase inhibitor GIP1. Its function is as follows. Glycoside hydrolase that exhibits xyloglucanase activity. Acts as an important virulence factor during P.sojae infection but also acts as a pathogen-associated molecular pattern (PAMP) in soybean and solanaceous species, where it can trigger defense responses including cell death. XEG1-induced cell death can be suppressed by P.sojae RxLR effectors. The PAMP activity is independent of its xyloglucanase activity. XEG1 induces plant defense responses in a RLP kinase Serk3/Bak1-dependent manner in Nicotiana benthamiana. Moreover, the perception of XEG1 occurs independently of the perception of ethylene-inducing xylanase Eix2 in Tomato. With truncated paralog XLP1, is required to elevate apoplastic sugar during P.sojae infection. In Phytophthora sojae (strain P6497) (Soybean stem and root rot agent), this protein is Xyloglucan-specific endo-beta-1,4-glucanase 1.